Reading from the N-terminus, the 95-residue chain is Small ribosomal subunit protein bS20 (95 aa).

The protein belongs to the bacterial ribosomal protein bS20 family.

Binds directly to 16S ribosomal RNA. The sequence is that of Small ribosomal subunit protein bS20 from Ehrlichia ruminantium (strain Gardel).